The sequence spans 212 residues: High frequency lysogenization protein HflD homolog (212 aa).

Positions 92–128 (LIALERKLNAKSAALDELGKRIGQLERQLEHFELLSE) form a coiled coil.

The protein belongs to the HflD family.

The protein localises to the cytoplasm. Its subcellular location is the cell inner membrane. In Pectobacterium atrosepticum (strain SCRI 1043 / ATCC BAA-672) (Erwinia carotovora subsp. atroseptica), this protein is High frequency lysogenization protein HflD homolog.